Reading from the N-terminus, the 454-residue chain is Retinoblastoma-binding protein homolog 5 (454 aa).

WD repeat units lie at residues 23–64 (LQNA…RTFS), 65–104 (AHCLPVSCLSWSRDGRKLLTSSADNSIAMFDVLAGTLLHR), 153–192 (SSDESASCVSYDRKGKYIIAGTGKGKLLIYNAETLKCVAW), 196–235 (NTVQQIRQIIVPMKSRFIITNTQDRVIRTYELEDLLHQRG), 248–288 (VNKA…LIKI), and 292–330 (NKGEALLDVQWHPTRPIILSIAQGTVSMWTQAHVENWSA).

Component of the SET2 complex (also known as the SET1/COMPASS complex), which contains at least set-2, swd-2.1, cfp-1, rbbp-5, wdr-5.1, dpy-30 and ash-2.

The protein localises to the nucleus. In terms of biological role, required for di- and trimethylation at 'Lys-4' of histone H3. Regulates left/right asymmetry of ASE sensory neurons, via its role as a component of the SET2 complex. This Caenorhabditis elegans protein is Retinoblastoma-binding protein homolog 5 (rbbp-5).